The following is a 117-amino-acid chain: Non-specific lipid-transfer protein 1 (117 aa).

A signal peptide spans 1 to 26 (MAYSAMTKLALVVALCMVVSVPIAQA). 4 cysteine pairs are disulfide-bonded: Cys29/Cys76, Cys39/Cys53, Cys54/Cys99, and Cys74/Cys113.

This sequence belongs to the plant LTP family.

In terms of biological role, plant non-specific lipid-transfer proteins transfer phospholipids as well as galactolipids across membranes. May play a role in wax or cutin deposition in the cell walls of expanding epidermal cells and certain secretory tissues. This is Non-specific lipid-transfer protein 1 from Prunus dulcis (Almond).